The sequence spans 286 residues: Bifunctional protein FolD (286 aa).

NADP(+) contacts are provided by residues Gly-166–Ser-168 and Ile-232.

The protein belongs to the tetrahydrofolate dehydrogenase/cyclohydrolase family. As to quaternary structure, homodimer.

It catalyses the reaction (6R)-5,10-methylene-5,6,7,8-tetrahydrofolate + NADP(+) = (6R)-5,10-methenyltetrahydrofolate + NADPH. The catalysed reaction is (6R)-5,10-methenyltetrahydrofolate + H2O = (6R)-10-formyltetrahydrofolate + H(+). It functions in the pathway one-carbon metabolism; tetrahydrofolate interconversion. In terms of biological role, catalyzes the oxidation of 5,10-methylenetetrahydrofolate to 5,10-methenyltetrahydrofolate and then the hydrolysis of 5,10-methenyltetrahydrofolate to 10-formyltetrahydrofolate. In Vibrio campbellii (strain ATCC BAA-1116), this protein is Bifunctional protein FolD.